The chain runs to 409 residues: Peptidase T (409 aa).

Residue histidine 78 coordinates Zn(2+). Residue aspartate 80 is part of the active site. Aspartate 140 serves as a coordination point for Zn(2+). The Proton acceptor role is filled by glutamate 173. Zn(2+) contacts are provided by glutamate 174, aspartate 196, and histidine 379.

The protein belongs to the peptidase M20B family. Zn(2+) is required as a cofactor.

The protein localises to the cytoplasm. The catalysed reaction is Release of the N-terminal residue from a tripeptide.. Functionally, cleaves the N-terminal amino acid of tripeptides. The polypeptide is Peptidase T (Serratia proteamaculans (strain 568)).